A 398-amino-acid polypeptide reads, in one-letter code: Elongation factor Tu (398 aa).

Residues 10–207 (KPHVNIGTIG…TVDEYIPEPE (198 aa)) form the tr-type G domain. The interval 19–26 (GHVDHGKT) is G1. 19-26 (GHVDHGKT) lines the GTP pocket. Thr-26 contacts Mg(2+). The G2 stretch occupies residues 63–67 (GITIN). The G3 stretch occupies residues 84–87 (DAPG). GTP contacts are provided by residues 84–88 (DAPGH) and 139–142 (NKVD). Residues 139–142 (NKVD) are G4. The tract at residues 177-179 (SAL) is G5.

The protein belongs to the TRAFAC class translation factor GTPase superfamily. Classic translation factor GTPase family. EF-Tu/EF-1A subfamily. As to quaternary structure, monomer.

It is found in the cytoplasm. It carries out the reaction GTP + H2O = GDP + phosphate + H(+). Its function is as follows. GTP hydrolase that promotes the GTP-dependent binding of aminoacyl-tRNA to the A-site of ribosomes during protein biosynthesis. This is Elongation factor Tu from Streptococcus thermophilus (strain CNRZ 1066).